The sequence spans 1024 residues: Error-prone DNA polymerase (1024 aa).

Belongs to the DNA polymerase type-C family. DnaE2 subfamily.

It is found in the cytoplasm. The catalysed reaction is DNA(n) + a 2'-deoxyribonucleoside 5'-triphosphate = DNA(n+1) + diphosphate. In terms of biological role, DNA polymerase involved in damage-induced mutagenesis and translesion synthesis (TLS). It is not the major replicative DNA polymerase. This Vibrio vulnificus (strain CMCP6) protein is Error-prone DNA polymerase.